Reading from the N-terminus, the 248-residue chain is 3-deoxy-manno-octulosonate cytidylyltransferase (248 aa).

This sequence belongs to the KdsB family.

The protein localises to the cytoplasm. The enzyme catalyses 3-deoxy-alpha-D-manno-oct-2-ulosonate + CTP = CMP-3-deoxy-beta-D-manno-octulosonate + diphosphate. It participates in nucleotide-sugar biosynthesis; CMP-3-deoxy-D-manno-octulosonate biosynthesis; CMP-3-deoxy-D-manno-octulosonate from 3-deoxy-D-manno-octulosonate and CTP: step 1/1. The protein operates within bacterial outer membrane biogenesis; lipopolysaccharide biosynthesis. Functionally, activates KDO (a required 8-carbon sugar) for incorporation into bacterial lipopolysaccharide in Gram-negative bacteria. The sequence is that of 3-deoxy-manno-octulosonate cytidylyltransferase from Klebsiella pneumoniae (strain 342).